The chain runs to 208 residues: MEVNIFNIKGEETGRKVILEDSVFRVEPNDYIVYLDVRRYLANKRQGTAKSKERSEMSGSTRKLGRQKGSGGARRGDINSPVLVGGARVFGPKPRDYSFKLNKKEKKMARRSVLSCRMREGGVIVVEDFSFETPKTKEFLDLAKNLKIQIANSKLLVILPEKDDNIFLSARNISKVKVTTVSNLNTYEILDVNRLVILESSVVAINNF.

Residues Arg45–Ile78 are disordered.

It belongs to the universal ribosomal protein uL4 family. In terms of assembly, part of the 50S ribosomal subunit.

Its function is as follows. One of the primary rRNA binding proteins, this protein initially binds near the 5'-end of the 23S rRNA. It is important during the early stages of 50S assembly. It makes multiple contacts with different domains of the 23S rRNA in the assembled 50S subunit and ribosome. In terms of biological role, forms part of the polypeptide exit tunnel. This Azobacteroides pseudotrichonymphae genomovar. CFP2 protein is Large ribosomal subunit protein uL4.